The sequence spans 106 residues: Large ribosomal subunit protein uL24 (106 aa).

The protein belongs to the universal ribosomal protein uL24 family. In terms of assembly, part of the 50S ribosomal subunit.

Its function is as follows. One of two assembly initiator proteins, it binds directly to the 5'-end of the 23S rRNA, where it nucleates assembly of the 50S subunit. In terms of biological role, one of the proteins that surrounds the polypeptide exit tunnel on the outside of the subunit. The polypeptide is Large ribosomal subunit protein uL24 (Acinetobacter baylyi (strain ATCC 33305 / BD413 / ADP1)).